Reading from the N-terminus, the 205-residue chain is Ribonuclease HII (205 aa).

The RNase H type-2 domain occupies 14 to 201; that stretch reads EIVAGVDEAG…KGNINHSAIL (188 aa). A divalent metal cation contacts are provided by D20, E21, and D111.

Belongs to the RNase HII family. It depends on Mn(2+) as a cofactor. Requires Mg(2+) as cofactor.

Its subcellular location is the cytoplasm. The enzyme catalyses Endonucleolytic cleavage to 5'-phosphomonoester.. Its function is as follows. Endonuclease that specifically degrades the RNA of RNA-DNA hybrids. In Orientia tsutsugamushi (strain Boryong) (Rickettsia tsutsugamushi), this protein is Ribonuclease HII.